We begin with the raw amino-acid sequence, 177 residues long: Inner membrane protein p22 (177 aa).

Residues 1-7 (MFNIKMT) are Intravirion-facing. Residues 8–28 (ISTLLIALIILVIIILVVFLY) traverse the membrane as a helical segment. Over 29-177 (YKKQQPPKKV…IALPRNHKHA (149 aa)) the chain is Virion surface.

It belongs to the asfivirus inner membrane protein p22 family.

The protein localises to the virion membrane. Its subcellular location is the host cell membrane. This is Inner membrane protein p22 from Ornithodoros (relapsing fever ticks).